Reading from the N-terminus, the 99-residue chain is Protein MOST-1 (99 aa).

In terms of assembly, interacts with TSPO, IGHM and IGHD. As to expression, expressed in the heart, kidney, liver, pancreas, small intestine, ovary, testis, prostate and thymus. Expressed in all of the cancer cell lines tested.

It localises to the cytoplasm. The protein localises to the microsome membrane. It is found in the endoplasmic reticulum membrane. In terms of biological role, may be involved in cell survival, proliferation and progression of cancer cells. In Homo sapiens (Human), this protein is Protein MOST-1 (C8orf17).